We begin with the raw amino-acid sequence, 309 residues long: Homoserine O-succinyltransferase (309 aa).

Cys-142 (acyl-thioester intermediate) is an active-site residue. Substrate contacts are provided by Lys-163 and Ser-192. His-235 functions as the Proton acceptor in the catalytic mechanism. Residue Glu-237 is part of the active site. Residue Arg-249 coordinates substrate.

Belongs to the MetA family.

The protein resides in the cytoplasm. The catalysed reaction is L-homoserine + succinyl-CoA = O-succinyl-L-homoserine + CoA. Its pathway is amino-acid biosynthesis; L-methionine biosynthesis via de novo pathway; O-succinyl-L-homoserine from L-homoserine: step 1/1. In terms of biological role, transfers a succinyl group from succinyl-CoA to L-homoserine, forming succinyl-L-homoserine. In Photorhabdus laumondii subsp. laumondii (strain DSM 15139 / CIP 105565 / TT01) (Photorhabdus luminescens subsp. laumondii), this protein is Homoserine O-succinyltransferase.